A 358-amino-acid polypeptide reads, in one-letter code: Chorismate synthase (358 aa).

Residue arginine 47 participates in NADP(+) binding. FMN is bound by residues 124 to 126 (RSS), 240 to 241 (NA), glycine 284, 299 to 303 (KPVAT), and arginine 325.

This sequence belongs to the chorismate synthase family. In terms of assembly, homotetramer. FMNH2 serves as cofactor.

It carries out the reaction 5-O-(1-carboxyvinyl)-3-phosphoshikimate = chorismate + phosphate. It functions in the pathway metabolic intermediate biosynthesis; chorismate biosynthesis; chorismate from D-erythrose 4-phosphate and phosphoenolpyruvate: step 7/7. In terms of biological role, catalyzes the anti-1,4-elimination of the C-3 phosphate and the C-6 proR hydrogen from 5-enolpyruvylshikimate-3-phosphate (EPSP) to yield chorismate, which is the branch point compound that serves as the starting substrate for the three terminal pathways of aromatic amino acid biosynthesis. This reaction introduces a second double bond into the aromatic ring system. The protein is Chorismate synthase of Bacteroides fragilis (strain YCH46).